The chain runs to 330 residues: Elongation factor Ts (330 aa).

The segment at 79 to 82 (TDFV) is involved in Mg(2+) ion dislocation from EF-Tu.

The protein belongs to the EF-Ts family.

It localises to the cytoplasm. Its function is as follows. Associates with the EF-Tu.GDP complex and induces the exchange of GDP to GTP. It remains bound to the aminoacyl-tRNA.EF-Tu.GTP complex up to the GTP hydrolysis stage on the ribosome. The protein is Elongation factor Ts of Bacteroides fragilis (strain ATCC 25285 / DSM 2151 / CCUG 4856 / JCM 11019 / LMG 10263 / NCTC 9343 / Onslow / VPI 2553 / EN-2).